The sequence spans 400 residues: Lysophospholipid transporter LplT (400 aa).

Transmembrane regions (helical) follow at residues 19 to 39 (VIVAQFLSAFGDNALLFATLA), 53 to 73 (VLQMVFVGAYILFAPFVGQMA), 91 to 111 (AGAAGICLGVNPFVGYTLVGI), 139 to 159 (LMEASTIAAILLGSVAGGVLA), 164 to 184 (IAALVACALAYAGAVAANLFI), 195 to 213 (SWRLSAMTRSFFSACVVLW), 227 to 247 (LFWGAGVTLRFLLVLWVPVAL), 257 to 277 (YLNAMVAVGIVVGAGAAAKLV), 281 to 301 (TVSRCMPAGILIGVVVAIFSL), 304 to 324 (ALLPAYALLLLIGMLGGFFVV), 352 to 372 (NSAMLLMLGLYSLAVLVGVPA), and 373 to 393 (VAIGIGFGVLFALAIAALWIW).

This sequence belongs to the major facilitator superfamily. LplT (TC 2.A.1.42) family.

The protein localises to the cell inner membrane. In terms of biological role, catalyzes the facilitated diffusion of 2-acyl-glycero-3-phosphoethanolamine (2-acyl-GPE) into the cell. The sequence is that of Lysophospholipid transporter LplT from Salmonella enteritidis PT4 (strain P125109).